We begin with the raw amino-acid sequence, 757 residues long: 5-methyltetrahydropteroyltriglutamate--homocysteine methyltransferase (757 aa).

Residues arginine 15–lysine 18 and lysine 114 each bind 5-methyltetrahydropteroyltri-L-glutamate. L-homocysteine contacts are provided by residues isoleucine 428 to serine 430 and glutamate 481. L-methionine contacts are provided by residues isoleucine 428–serine 430 and glutamate 481. Residues arginine 512 to cysteine 513 and tryptophan 558 contribute to the 5-methyltetrahydropteroyltri-L-glutamate site. Residue aspartate 596 coordinates L-homocysteine. Aspartate 596 provides a ligand contact to L-methionine. Glutamate 602 is a binding site for 5-methyltetrahydropteroyltri-L-glutamate. Residues histidine 639, cysteine 641, and glutamate 663 each coordinate Zn(2+). The Proton donor role is filled by histidine 692. Residue cysteine 724 participates in Zn(2+) binding.

It belongs to the vitamin-B12 independent methionine synthase family. Requires Zn(2+) as cofactor.

The enzyme catalyses 5-methyltetrahydropteroyltri-L-glutamate + L-homocysteine = tetrahydropteroyltri-L-glutamate + L-methionine. The protein operates within amino-acid biosynthesis; L-methionine biosynthesis via de novo pathway; L-methionine from L-homocysteine (MetE route): step 1/1. In terms of biological role, catalyzes the transfer of a methyl group from 5-methyltetrahydrofolate to homocysteine resulting in methionine formation. This is 5-methyltetrahydropteroyltriglutamate--homocysteine methyltransferase from Lactococcus lactis subsp. cremoris (strain MG1363).